Consider the following 319-residue polypeptide: Methionyl-tRNA formyltransferase (319 aa).

112–115 (SILP) is a binding site for (6S)-5,6,7,8-tetrahydrofolate.

It belongs to the Fmt family.

The catalysed reaction is L-methionyl-tRNA(fMet) + (6R)-10-formyltetrahydrofolate = N-formyl-L-methionyl-tRNA(fMet) + (6S)-5,6,7,8-tetrahydrofolate + H(+). In terms of biological role, attaches a formyl group to the free amino group of methionyl-tRNA(fMet). The formyl group appears to play a dual role in the initiator identity of N-formylmethionyl-tRNA by promoting its recognition by IF2 and preventing the misappropriation of this tRNA by the elongation apparatus. This Shewanella denitrificans (strain OS217 / ATCC BAA-1090 / DSM 15013) protein is Methionyl-tRNA formyltransferase.